The sequence spans 1598 residues: Pentafunctional AROM polypeptide (1598 aa).

The segment at 1–384 (MGVPTKISIL…YEPRASTVSN (384 aa)) is 3-dehydroquinate synthase. NAD(+)-binding positions include 44 to 46 (DTN), 81 to 84 (ESSK), 114 to 116 (GGV), and aspartate 119. A 7-phospho-2-dehydro-3-deoxy-D-arabino-heptonate-binding site is contributed by arginine 130. 139-140 (TT) contacts NAD(+). Residues aspartate 146 and lysine 152 each contribute to the 7-phospho-2-dehydro-3-deoxy-D-arabino-heptonate site. Lysine 161 lines the NAD(+) pocket. Asparagine 162 contacts 7-phospho-2-dehydro-3-deoxy-D-arabino-heptonate. Residues 179–182 (FLNT) and asparagine 190 each bind NAD(+). Glutamate 194 provides a ligand contact to Zn(2+). Residues 194-197 (EVIK) and lysine 250 contribute to the 7-phospho-2-dehydro-3-deoxy-D-arabino-heptonate site. Catalysis depends on glutamate 260, which acts as the Proton acceptor; for 3-dehydroquinate synthase activity. Residues 264–268 (RNLLN) and histidine 271 each bind 7-phospho-2-dehydro-3-deoxy-D-arabino-heptonate. Residue histidine 271 coordinates Zn(2+). Catalysis depends on histidine 275, which acts as the Proton acceptor; for 3-dehydroquinate synthase activity. Positions 287 and 356 each coordinate 7-phospho-2-dehydro-3-deoxy-D-arabino-heptonate. Position 287 (histidine 287) interacts with Zn(2+). Residues 397 to 842 (VYPGFPKSLN…WNTLAQTFKV (446 aa)) form an EPSP synthase region. Residue cysteine 824 is the For EPSP synthase activity of the active site. Positions 867-1059 (AASIFIIGMR…RRKENTFFVS (193 aa)) are shikimate kinase. 874–881 (GMRGAGKT) serves as a coordination point for ATP. Residues 1060–1280 (LTFPDLTPAS…AAPGQLSARE (221 aa)) form a 3-dehydroquinase region. Histidine 1183 serves as the catalytic Proton acceptor; for 3-dehydroquinate dehydratase activity. Lysine 1211 functions as the Schiff-base intermediate with substrate; for 3-dehydroquinate dehydratase activity in the catalytic mechanism. The interval 1293 to 1598 (AKKFAVIGKP…GVSSSDDTIS (306 aa)) is shikimate dehydrogenase.

This sequence in the N-terminal section; belongs to the sugar phosphate cyclases superfamily. Dehydroquinate synthase family. It in the 2nd section; belongs to the EPSP synthase family. In the 3rd section; belongs to the shikimate kinase family. The protein in the 4th section; belongs to the type-I 3-dehydroquinase family. This sequence in the C-terminal section; belongs to the shikimate dehydrogenase family. As to quaternary structure, homodimer. It depends on Zn(2+) as a cofactor.

It localises to the cytoplasm. The enzyme catalyses 7-phospho-2-dehydro-3-deoxy-D-arabino-heptonate = 3-dehydroquinate + phosphate. It carries out the reaction 3-dehydroquinate = 3-dehydroshikimate + H2O. The catalysed reaction is shikimate + NADP(+) = 3-dehydroshikimate + NADPH + H(+). It catalyses the reaction shikimate + ATP = 3-phosphoshikimate + ADP + H(+). The enzyme catalyses 3-phosphoshikimate + phosphoenolpyruvate = 5-O-(1-carboxyvinyl)-3-phosphoshikimate + phosphate. It participates in metabolic intermediate biosynthesis; chorismate biosynthesis; chorismate from D-erythrose 4-phosphate and phosphoenolpyruvate: step 2/7. The protein operates within metabolic intermediate biosynthesis; chorismate biosynthesis; chorismate from D-erythrose 4-phosphate and phosphoenolpyruvate: step 3/7. Its pathway is metabolic intermediate biosynthesis; chorismate biosynthesis; chorismate from D-erythrose 4-phosphate and phosphoenolpyruvate: step 4/7. It functions in the pathway metabolic intermediate biosynthesis; chorismate biosynthesis; chorismate from D-erythrose 4-phosphate and phosphoenolpyruvate: step 5/7. It participates in metabolic intermediate biosynthesis; chorismate biosynthesis; chorismate from D-erythrose 4-phosphate and phosphoenolpyruvate: step 6/7. Its function is as follows. The AROM polypeptide catalyzes 5 consecutive enzymatic reactions in prechorismate polyaromatic amino acid biosynthesis. This is Pentafunctional AROM polypeptide from Paracoccidioides brasiliensis (strain Pb18).